We begin with the raw amino-acid sequence, 118 residues long: Large ribosomal subunit protein bL20 (118 aa).

The protein belongs to the bacterial ribosomal protein bL20 family.

Functionally, binds directly to 23S ribosomal RNA and is necessary for the in vitro assembly process of the 50S ribosomal subunit. It is not involved in the protein synthesizing functions of that subunit. This chain is Large ribosomal subunit protein bL20, found in Erwinia tasmaniensis (strain DSM 17950 / CFBP 7177 / CIP 109463 / NCPPB 4357 / Et1/99).